A 66-amino-acid polypeptide reads, in one-letter code: DNA-directed RNA polymerase subunit omega (66 aa).

Belongs to the RNA polymerase subunit omega family. In terms of assembly, the RNAP catalytic core consists of 2 alpha, 1 beta, 1 beta' and 1 omega subunit. When a sigma factor is associated with the core the holoenzyme is formed, which can initiate transcription.

It carries out the reaction RNA(n) + a ribonucleoside 5'-triphosphate = RNA(n+1) + diphosphate. Functionally, promotes RNA polymerase assembly. Latches the N- and C-terminal regions of the beta' subunit thereby facilitating its interaction with the beta and alpha subunits. The polypeptide is DNA-directed RNA polymerase subunit omega (Clostridium botulinum (strain Alaska E43 / Type E3)).